Here is a 307-residue protein sequence, read N- to C-terminus: ATP synthase gamma chain (307 aa).

Belongs to the ATPase gamma chain family. As to quaternary structure, F-type ATPases have 2 components, CF(1) - the catalytic core - and CF(0) - the membrane proton channel. CF(1) has five subunits: alpha(3), beta(3), gamma(1), delta(1), epsilon(1). CF(0) has three main subunits: a, b and c.

It is found in the cell membrane. Its function is as follows. Produces ATP from ADP in the presence of a proton gradient across the membrane. The gamma chain is believed to be important in regulating ATPase activity and the flow of protons through the CF(0) complex. The chain is ATP synthase gamma chain from Mycolicibacterium smegmatis (strain ATCC 700084 / mc(2)155) (Mycobacterium smegmatis).